We begin with the raw amino-acid sequence, 470 residues long: Argininosuccinate lyase (470 aa).

Belongs to the lyase 1 family. Argininosuccinate lyase subfamily.

It is found in the cytoplasm. The catalysed reaction is 2-(N(omega)-L-arginino)succinate = fumarate + L-arginine. The protein operates within amino-acid biosynthesis; L-arginine biosynthesis; L-arginine from L-ornithine and carbamoyl phosphate: step 3/3. The protein is Argininosuccinate lyase of Leptospira borgpetersenii serovar Hardjo-bovis (strain JB197).